Here is a 263-residue protein sequence, read N- to C-terminus: Palmitoyltransferase ZDHHC22 (263 aa).

Residues 1-9 lie on the Cytoplasmic side of the membrane; the sequence is MLALRLLNV. The chain crosses the membrane as a helical span at residues 10-30; the sequence is VAPAYFLCISLVTFVLQLFLF. Topologically, residues 31-48 are lumenal; that stretch reads LPSMREDPAAARLFSPAL. A helical membrane pass occupies residues 49 to 69; it reads LHGALFLFLSANALGNYVLVI. Over 70 to 125 the chain is Cytoplasmic; sequence QNSPDDLGACQGASARKTPCPSPSTHFCRVCARVTLRHDHHCFFTGNCIGSRNMRN. One can recognise a DHHC domain in the interval 92–131; sequence PSTHFCRVCARVTLRHDHHCFFTGNCIGSRNMRNFVLFCL. C111 (S-palmitoyl cysteine intermediate) is an active-site residue. Helical transmembrane passes span 126–146 and 147–167; these read FVLF…AGVA and YISA…TLLP. At 168–182 the chain is on the cytoplasmic side; the sequence is TSISQFFSGAVLGSE. The chain crosses the membrane as a helical span at residues 183 to 203; the sequence is MFVILMLYLWFAIGLACAGFC. At 204–263 the chain is on the lumenal side; sequence CHQLLLILRGQTRHQVRKGVAVRARPWRKNLQEVFGKRWLLGLLVPMFNVGSESSKQQDK.

The protein belongs to the DHHC palmitoyltransferase family. In terms of assembly, interacts with CNN3. As to expression, widely expressed.

Its subcellular location is the endoplasmic reticulum membrane. It localises to the golgi apparatus membrane. It catalyses the reaction L-cysteinyl-[protein] + hexadecanoyl-CoA = S-hexadecanoyl-L-cysteinyl-[protein] + CoA. In terms of biological role, palmitoyltransferase that could catalyze the addition of palmitate onto various protein substrates and be involved in a variety of cellular processes. Catalyzes the palmitoylation of KCNMA1, regulating localization of KCNMA1 to the plasma membrane. Might also mediate palmitoylation of CNN3. The chain is Palmitoyltransferase ZDHHC22 from Homo sapiens (Human).